The following is a 156-amino-acid chain: Small ribosomal subunit protein uS7 (156 aa).

It belongs to the universal ribosomal protein uS7 family. As to quaternary structure, part of the 30S ribosomal subunit. Contacts proteins S9 and S11.

In terms of biological role, one of the primary rRNA binding proteins, it binds directly to 16S rRNA where it nucleates assembly of the head domain of the 30S subunit. Is located at the subunit interface close to the decoding center, probably blocks exit of the E-site tRNA. The sequence is that of Small ribosomal subunit protein uS7 from Mycoplasmopsis agalactiae (strain NCTC 10123 / CIP 59.7 / PG2) (Mycoplasma agalactiae).